The primary structure comprises 362 residues: Ribosomal RNA large subunit methyltransferase F (362 aa).

Over residues 1–28 (MNTPLKPKHGQKTNRKPKANKPVVKKQQ) the composition is skewed to basic residues. The disordered stretch occupies residues 1 to 40 (MNTPLKPKHGQKTNRKPKANKPVVKKQQTKQPPTHKVQGE).

Belongs to the methyltransferase superfamily. METTL16/RlmF family.

The protein resides in the cytoplasm. The enzyme catalyses adenosine(1618) in 23S rRNA + S-adenosyl-L-methionine = N(6)-methyladenosine(1618) in 23S rRNA + S-adenosyl-L-homocysteine + H(+). Its function is as follows. Specifically methylates the adenine in position 1618 of 23S rRNA. The sequence is that of Ribosomal RNA large subunit methyltransferase F from Vibrio cholerae serotype O1 (strain M66-2).